The sequence spans 347 residues: 4-hydroxy-tetrahydrodipicolinate reductase 1, chloroplastic (347 aa).

The transit peptide at 1–51 (MATNGLMASSSVFLHRPRIAFASRTNQTVGKYGKGRVSFMGIGTRRLPVVL) directs the protein to the chloroplast. Ser52 carries the N-acetylserine modification. NAD(+)-binding positions include 79 to 84 (GCSGKM), 171 to 173 (GTT), and 194 to 197 (SPQM). Residue His230 is the Proton donor/acceptor of the active site. Residue Lys234 is the Proton donor of the active site. 239–240 (GT) serves as a coordination point for (S)-2,3,4,5-tetrahydrodipicolinate.

This sequence belongs to the DapB family.

The protein resides in the plastid. It localises to the chloroplast. The enzyme catalyses (S)-2,3,4,5-tetrahydrodipicolinate + NAD(+) + H2O = (2S,4S)-4-hydroxy-2,3,4,5-tetrahydrodipicolinate + NADH + H(+). It carries out the reaction (S)-2,3,4,5-tetrahydrodipicolinate + NADP(+) + H2O = (2S,4S)-4-hydroxy-2,3,4,5-tetrahydrodipicolinate + NADPH + H(+). Its pathway is amino-acid biosynthesis; L-lysine biosynthesis via DAP pathway; (S)-tetrahydrodipicolinate from L-aspartate: step 4/4. Its function is as follows. Catalyzes the conversion of 4-hydroxy-tetrahydrodipicolinate (HTPA) to tetrahydrodipicolinate. This chain is 4-hydroxy-tetrahydrodipicolinate reductase 1, chloroplastic (DAPB1), found in Arabidopsis thaliana (Mouse-ear cress).